A 530-amino-acid polypeptide reads, in one-letter code: Tetrahydroberberine oxidase (530 aa).

The signal sequence occupies residues 1–24 (MSKMASSIFATFSLLSSLLPTSLA). An intrachain disulfide couples Cys-36 to Cys-94. The N-linked (GlcNAc...) asparagine glycan is linked to Asn-51. Positions 72-246 (TTPKPNFIVT…LAWKIRLVPV (175 aa)) constitute an FAD-binding PCMH-type domain. The 6-(S-cysteinyl)-8alpha-(pros-histidyl)-FAD (His-Cys) cross-link spans 109–171 (HDFEGLSYVS…GVHAFPAGLC (63 aa)). Asn-483 carries an N-linked (GlcNAc...) asparagine glycan.

It belongs to the oxygen-dependent FAD-linked oxidoreductase family. FAD serves as cofactor. Post-translationally, the FAD cofactor is bound via a bicovalent 6-S-cysteinyl, 8alpha-N1-histidyl FAD linkage.

The enzyme catalyses (S)-canadine + 2 O2 + H(+) = berberine + 2 H2O2. Catalyzes the oxidation of different tetrahydroprotoberberines, such as (S)-canadine, (S)-scoulerine and (S)-corypalmine. Catalyzes the oxidation of (S)-coreximine and (S)-tetrahydropalmatine. Catalyzes the oxidation of different 1-benzylisoquinoline alkaloids, such as (S)-norreticuline, (S)-nororientaline, (S)-coclaurine and (S)-norisoorientaline. Exhibits strict specificity for the (S)-enantiomer of tetrahydroprotoberbirines and 1-benzylisoquinoline alkaloids. In Berberis wilsoniae (Mrs Wilson's barberry), this protein is Tetrahydroberberine oxidase.